Consider the following 118-residue polypeptide: Neutral phospholipase A2 homolog taipoxin beta chain 2 (118 aa).

Cystine bridges form between C11–C71, C27–C117, C29–C45, C44–C98, C51–C91, C60–C84, and C78–C89.

Belongs to the phospholipase A2 family. Group I subfamily. D49 sub-subfamily. Heterotrimer of alpha, beta, and gamma chains; non-covalently linked. Expressed by the venom gland.

It is found in the secreted. Heterotrimer: Snake venom phospholipase A2 (PLA2) heterotrimer that acts as a potent presynaptic neurotoxin by blocking synaptic transmission and synaptic vesicle recycling. May act by binding in a calcium-dependent fashion to neurotonal pentraxin-1 (NPTX1) and neurotonal pentraxin-2 (NPTX2), but not to neuronal pentraxin receptor (NPTXR). Also binds to taipoxin-associated calcium binding protein 49 (RCN2), a protein localized in the lumen of endoplasmic reticulum. Functionally, monomer (beta chain): Snake venom phospholipase A2 homolog that is neither toxic nor enzymatically active. Does not bind calcium. This Oxyuranus scutellatus scutellatus (Australian taipan) protein is Neutral phospholipase A2 homolog taipoxin beta chain 2.